A 771-amino-acid polypeptide reads, in one-letter code: Caldesmon (771 aa).

Disordered stretches follow at residues 23-91 (ERLS…ALLE) and 104-599 (LQEA…FSPK). The tract at residues 26 to 199 (SYQRNDDDEE…PKEVPTEENQ (174 aa)) is myosin and calmodulin-binding. Y27 bears the Phosphotyrosine mark. Composition is skewed to basic and acidic residues over residues 47 to 67 (QERL…EKSE), 104 to 115 (LQEALERQKEFD), 139 to 155 (ITGK…RCEI), 170 to 194 (WRQD…KEVP), 203 to 215 (AVEK…EVVE), 240 to 435 (AADK…ESLP), 442 to 484 (SKKD…RELT), 509 to 518 (GSEKLKEKQQ), and 525 to 592 (DELK…EKKP). 10 tandem repeats follow at residues 251-265 (EREK…RLKA), 266-278 (EEEK…KQKA), 279-291 (EEEK…RERA), 294-306 (EEEK…RERA), 309-321 (EEER…RERA), 324-336 (EEER…RAKA), 337-349 (EEER…RAKA), 350-362 (EEER…RAKA), 363-375 (EKER…RERA), and 378-390 (EEEK…KARL). The tract at residues 251-390 (EREKLEAEEK…KRAAEEKARL (140 aa)) is 10 X 13 AA approximate tandem repeats. Positions 523 to 580 (ELDELKKRREERRKILEEEEQKKKQEEAERKIREEEEKKRMKEEIERRRAEAAEKRQK) are tropomyosin-binding. S597 is modified (phosphoserine; by CDK1). Residues 612–644 (LNKSAQKSGMKPAHTTAVVSKIDSRLEQYTSAV) form a strong actin-binding region. The interval 622–632 (KPAHTTAVVSK) is tropomyosin-binding. Y640 carries the post-translational modification Phosphotyrosine. The segment at 674-680 (WEKGNVF) is calmodulin-binding. Residues 676 to 771 (KGNVFSSPGG…NGLRQFEKEP (96 aa)) form a disordered region. Residues 679–691 (VFSSPGGTGTPNK) show a composition bias toward polar residues. At S682 the chain carries Phosphoserine; by CDK1. 2 positions are modified to phosphothreonine; by CDK1: T688 and T711. S717 carries the post-translational modification Phosphoserine; by CDK1. The span at 723 to 742 (SDLRPGDVSGKRNLWEKQSV) shows a compositional bias: basic and acidic residues. A weak actin-binding region spans residues 726-752 (RPGDVSGKRNLWEKQSVEKPAASSSKV).

This sequence belongs to the caldesmon family. Phosphorylated in non-muscle cells. Phosphorylation by CDK1 during mitosis causes caldesmon to dissociate from microfilaments. Phosphorylation reduces caldesmon binding to actin, myosin, and calmodulin as well as its inhibition of actomyosin ATPase activity. Phosphorylation also occurs in both quiescent and dividing smooth muscle cells with similar effects on the interaction with actin and calmodulin and on microfilaments reorganization. As to expression, high-molecular-weight caldesmon (h-caldesmon) is predominantly expressed in smooth muscles, whereas low-molecular-weight caldesmon (l-caldesmon) is widely distributed in non-muscle tissues and cells. Not expressed in skeletal muscle or heart.

It localises to the cytoplasm. The protein resides in the cytoskeleton. It is found in the myofibril. Its subcellular location is the stress fiber. In terms of biological role, actin- and myosin-binding protein implicated in the regulation of actomyosin interactions in smooth muscle and nonmuscle cells (could act as a bridge between myosin and actin filaments). Stimulates actin binding of tropomyosin which increases the stabilization of actin filament structure. In muscle tissues, inhibits the actomyosin ATPase by binding to F-actin. This inhibition is attenuated by calcium-calmodulin and is potentiated by tropomyosin. Interacts with actin, myosin, two molecules of tropomyosin and with calmodulin. Also plays an essential role during cellular mitosis and receptor capping. In Gallus gallus (Chicken), this protein is Caldesmon (CALD1).